The sequence spans 266 residues: Putative tyrosine phosphatase 197R (266 aa).

The Tyrosine-protein phosphatase domain maps to 15–167 (RPTLGSLSDK…LFGSQNINND (153 aa)). Catalysis depends on Cys-111, which acts as the Phosphocysteine intermediate.

It belongs to the protein-tyrosine phosphatase family.

It carries out the reaction O-phospho-L-tyrosyl-[protein] + H2O = L-tyrosyl-[protein] + phosphate. The polypeptide is Putative tyrosine phosphatase 197R (Invertebrate iridescent virus 6 (IIV-6)).